The primary structure comprises 169 residues: S-ribosylhomocysteine lyase (169 aa).

Fe cation is bound by residues histidine 54, histidine 58, and cysteine 128.

The protein belongs to the LuxS family. In terms of assembly, homodimer. Fe cation is required as a cofactor.

It catalyses the reaction S-(5-deoxy-D-ribos-5-yl)-L-homocysteine = (S)-4,5-dihydroxypentane-2,3-dione + L-homocysteine. Involved in the synthesis of autoinducer 2 (AI-2) which is secreted by bacteria and is used to communicate both the cell density and the metabolic potential of the environment. The regulation of gene expression in response to changes in cell density is called quorum sensing. Catalyzes the transformation of S-ribosylhomocysteine (RHC) to homocysteine (HC) and 4,5-dihydroxy-2,3-pentadione (DPD). The chain is S-ribosylhomocysteine lyase from Aeromonas hydrophila subsp. hydrophila (strain ATCC 7966 / DSM 30187 / BCRC 13018 / CCUG 14551 / JCM 1027 / KCTC 2358 / NCIMB 9240 / NCTC 8049).